Reading from the N-terminus, the 144-residue chain is Eukaryotic translation initiation factor 1A, Y-chromosomal (144 aa).

Over residues 1-15 (MPKNKGKGGKNRRRG) the composition is skewed to basic residues. The tract at residues 1-26 (MPKNKGKGGKNRRRGKNENESEKREL) is disordered. Over residues 16–26 (KNENESEKREL) the composition is skewed to basic and acidic residues. The 75-residue stretch at 22–96 (EKRELVFKED…NKADVILKYN (75 aa)) folds into the S1-like domain. A Glycyl lysine isopeptide (Lys-Gly) (interchain with G-Cter in ubiquitin) cross-link involves residue Lys88. Residues 114-144 (KINETDTFGPGDDDEIQFDDIGDDDEDIDDI) are disordered. The span at 124–144 (GDDDEIQFDDIGDDDEDIDDI) shows a compositional bias: acidic residues.

The protein belongs to the eIF-1A family. As to quaternary structure, component of the 43S pre-initiation complex (43S PIC), which is composed of the 40S ribosomal subunit, EIF1, eIF1A (EIF1AX), eIF3 complex, EIF5 and eIF2-GTP-initiator tRNA complex (eIF2 ternary complex). Interacts with EIF5; this interaction contributes to the maintenance of EIF1 within the open 43S PIC. Interacts through its C-terminal domain (CTD) with the CTD of EIF5B; from the location of the start codon by the 43S complex until the formation of the 80S complex. In terms of tissue distribution, ubiquitous.

The protein localises to the cytoplasm. Component of the 43S pre-initiation complex (43S PIC), which binds to the mRNA cap-proximal region, scans mRNA 5'-untranslated region, and locates the initiation codon. This protein enhances formation of the cap-proximal complex. Together with EIF1, facilitates scanning, start codon recognition, promotion of the assembly of 48S complex at the initiation codon (43S PIC becomes 48S PIC after the start codon is reached), and dissociation of aberrant complexes. After start codon location, together with EIF5B orients the initiator methionine-tRNA in a conformation that allows 60S ribosomal subunit joining to form the 80S initiation complex. Is released after 80S initiation complex formation, just after GTP hydrolysis by EIF5B, and before release of EIF5B. Its globular part is located in the A site of the 40S ribosomal subunit. Its interaction with EIF5 during scanning contribute to the maintenance of EIF1 within the open 43S PIC. In contrast to yeast orthologs, does not bind EIF1. This chain is Eukaryotic translation initiation factor 1A, Y-chromosomal (EIF1AY), found in Homo sapiens (Human).